The sequence spans 287 residues: ATP synthase gamma chain (287 aa).

The protein belongs to the ATPase gamma chain family. In terms of assembly, F-type ATPases have 2 components, CF(1) - the catalytic core - and CF(0) - the membrane proton channel. CF(1) has five subunits: alpha(3), beta(3), gamma(1), delta(1), epsilon(1). CF(0) has three main subunits: a, b and c.

The protein localises to the cell membrane. Produces ATP from ADP in the presence of a proton gradient across the membrane. The gamma chain is believed to be important in regulating ATPase activity and the flow of protons through the CF(0) complex. The polypeptide is ATP synthase gamma chain (Geobacillus stearothermophilus (Bacillus stearothermophilus)).